Reading from the N-terminus, the 217-residue chain is Large ribosomal subunit protein bL25 (217 aa).

Residues 187–217 (STPSGLEVEEETGEEESAEPEVIEKGKKEEE) are disordered. A compositionally biased stretch (acidic residues) spans 193–207 (EVEEETGEEESAEPE). The segment covering 208 to 217 (VIEKGKKEEE) has biased composition (basic and acidic residues).

Belongs to the bacterial ribosomal protein bL25 family. CTC subfamily. In terms of assembly, part of the 50S ribosomal subunit; part of the 5S rRNA/L5/L18/L25 subcomplex. Contacts the 5S rRNA. Binds to the 5S rRNA independently of L5 and L18.

Functionally, this is one of the proteins that binds to the 5S RNA in the ribosome where it forms part of the central protuberance. This chain is Large ribosomal subunit protein bL25, found in Thermosipho africanus (strain TCF52B).